The primary structure comprises 311 residues: Pyrimidine-specific ribonucleoside hydrolase RihA (311 aa).

H240 is an active-site residue.

It belongs to the IUNH family. RihA subfamily.

In terms of biological role, hydrolyzes with equal efficiency cytidine or uridine to ribose and cytosine or uracil, respectively. The sequence is that of Pyrimidine-specific ribonucleoside hydrolase RihA from Escherichia coli O139:H28 (strain E24377A / ETEC).